The chain runs to 465 residues: Ribulose bisphosphate carboxylase large chain (465 aa).

N6,N6,N6-trimethyllysine is present on Lys4. Substrate-binding residues include Asn113 and Thr163. The Proton acceptor role is filled by Lys165. Substrate is bound at residue Lys167. Positions 191, 193, and 194 each coordinate Mg(2+). An N6-carboxylysine modification is found at Lys191. Residue His284 is the Proton acceptor of the active site. Positions 285, 317, and 369 each coordinate substrate.

Belongs to the RuBisCO large chain family. Type I subfamily. As to quaternary structure, heterohexadecamer of 8 large chains and 8 small chains. The cofactor is Mg(2+).

It is found in the plastid. The protein resides in the chloroplast. It catalyses the reaction 2 (2R)-3-phosphoglycerate + 2 H(+) = D-ribulose 1,5-bisphosphate + CO2 + H2O. The catalysed reaction is D-ribulose 1,5-bisphosphate + O2 = 2-phosphoglycolate + (2R)-3-phosphoglycerate + 2 H(+). Its function is as follows. RuBisCO catalyzes two reactions: the carboxylation of D-ribulose 1,5-bisphosphate, the primary event in carbon dioxide fixation, as well as the oxidative fragmentation of the pentose substrate in the photorespiration process. Both reactions occur simultaneously and in competition at the same active site. This is Ribulose bisphosphate carboxylase large chain from Sarracenia flava (Yellow pitcher plant).